The chain runs to 1334 residues: Adenylate cyclase type 9 (1334 aa).

2 disordered regions span residues 1-28 and 49-71; these read MASP…SNSV and ISSS…GLRR. Residues 1–113 are Cytoplasmic-facing; the sequence is MASPPHQQLL…CFPQTQRRFR (113 aa). Residues 16–28 are compositionally biased toward polar residues; that stretch reads EVSCDSSGDSNSV. Residues 57 to 69 show a composition bias toward gly residues; sequence ESGGVGRGGGGGL. A helical membrane pass occupies residues 114 to 134; the sequence is YALFYIGSACLLWGIYFGVHM. Residues 135-137 lie on the Extracellular side of the membrane; that stretch reads REK. The chain crosses the membrane as a helical span at residues 138–158; it reads QMVFMVPALCFLLVCVAFFAF. Topologically, residues 159 to 167 are cytoplasmic; the sequence is TFTKAYARR. Residues 168 to 187 traverse the membrane as a helical segment; that stretch reads YVWTSGYTLLVFALTLAPQF. The Extracellular segment spans residues 188-207; it reads QPWTLGERQRVQPRPAAPVD. The helical transmembrane segment at 208–227 threads the bilayer; that stretch reads TCLSQVGSFSMCVEVLLLLY. The Cytoplasmic portion of the chain corresponds to 228 to 233; the sequence is TVMHLP. A helical membrane pass occupies residues 234–250; that stretch reads LYLSLFLGLSYSVLFET. The Extracellular segment spans residues 251 to 269; the sequence is SAFRDESCTLLGGGAVYWE. The chain crosses the membrane as a helical span at residues 270–290; sequence LLSKAFLHVCIHAIGIHLFIM. Topologically, residues 291 to 768 are cytoplasmic; the sequence is SEVRSRSTFL…VKTFASATFS (478 aa). The disordered stretch occupies residues 338–363; that stretch reads QGDDESENSVKRHSTSSPKNRKKKPS. A compositionally biased stretch (basic residues) spans 348–363; that stretch reads KRHSTSSPKNRKKKPS. Residues Asp388, Ile389, and Asp432 each coordinate Mg(2+). Residues 388 to 393, 430 to 432, and Arg476 each bind ATP; these read DIVGFT and LGD. Residues 635–670 form a disordered region; it reads GCQDEHKNSTKAPGGHSPKTQNGLLSPPQEEKLSNS. A helical transmembrane segment spans residues 769-789; it reads SLLDVFLSTTVFLILSVTCFL. The Extracellular segment spans residues 790–800; sequence KHGMVASPPPP. Residues 801 to 821 traverse the membrane as a helical segment; it reads AAVVVFVIAILLEVLSLVISV. Topologically, residues 822 to 849 are cytoplasmic; that stretch reads RMVFFLEEVMACTKRLLELISGWLPRHF. A helical transmembrane segment spans residues 850 to 870; the sequence is LGAILVSLPALAVFSHFTSDF. Over 871–873 the chain is Extracellular; sequence ETN. The helical transmembrane segment at 874 to 894 threads the bilayer; that stretch reads IHYTMFMCCAILIAIVQYCNF. At 895-902 the chain is on the cytoplasmic side; that stretch reads CQLSSWMR. A helical transmembrane segment spans residues 903–923; that stretch reads SLLATVVGAVLLILLYVSLCP. Topologically, residues 924–957 are extracellular; that stretch reads DSSVETLHLDLAQNLSSRKSPCNSSMPADVKRPA. Asn937 and Asn946 each carry an N-linked (GlcNAc...) asparagine glycan. A helical membrane pass occupies residues 958–978; that stretch reads DLIGQEVILAVFLLLLLVWFL. The Cytoplasmic segment spans residues 979 to 1334; it reads NRSFEVSYRL…LTKLNVSKSV (356 aa). ATP is bound by residues Lys1090, 1167–1169, 1174–1178, and Lys1214; these read DIW and NIASR. Positions 1266–1303 are disordered; it reads SVQNSDKTAHATDNSETKDALPSSKKLQKEPTKAEERC. 2 stretches are compositionally biased toward basic and acidic residues: residues 1272–1284 and 1292–1303; these read KTAH…ETKD and LQKEPTKAEERC.

This sequence belongs to the adenylyl cyclase class-4/guanylyl cyclase family. Requires Mg(2+) as cofactor. The cofactor is Mn(2+). As to expression, detected in embryonic heart (at protein level).

The protein localises to the cell membrane. It localises to the membrane. The catalysed reaction is ATP = 3',5'-cyclic AMP + diphosphate. Its activity is regulated as follows. Insensitive to calcium/calmodulin, forskolin and somatostatin. Stimulated by beta-adrenergic receptor activation. Activity is down-regulated by calcium/calcineurin. Functionally, adenylyl cyclase that catalyzes the formation of the signaling molecule cAMP in response to activation of G protein-coupled receptors. The polypeptide is Adenylate cyclase type 9 (ADCY9) (Gallus gallus (Chicken)).